Here is a 269-residue protein sequence, read N- to C-terminus: Short-chain dehydrogenase/reductase ABA4 (269 aa).

The NADP(+) site is built by Ile-34, Asp-80, Arg-144, Tyr-174, Lys-178, Ile-207, and Thr-209. Residue Tyr-174 is the Proton donor of the active site. Lys-178 serves as the catalytic Lowers pKa of active site Tyr.

The protein belongs to the short-chain dehydrogenases/reductases (SDR) family.

It functions in the pathway hormone biosynthesis. Short-chain dehydrogenase/reductase involved in the biosynthesis of abscisic acid (ABA), a phytohormone that acts antagonistically toward salicylic acid (SA), jasmonic acid (JA) and ethylene (ETH) signaling, to impede plant defense responses. During pathogen-host interaction, ABA plays a dual role in disease severity by increasing plant susceptibility and accelerating pathogenesis in the fungus itself. The first step of the pathway catalyzes the reaction from farnesyl diphosphate to alpha-ionylideneethane performed by the alpha-ionylideneethane synthase ABA3 via a three-step reaction mechanism involving 2 neutral intermediates, beta-farnesene and allofarnesene. The cytochrome P450 monooxygenase ABA1 might then be involved in the conversion of alpha-ionylideneethane to alpha-ionylideneacetic acid. Alpha-ionylideneacetic acid is further converted to abscisic acid in 2 steps involving the cytochrome P450 monooxygenase ABA2 and the short-chain dehydrogenase/reductase ABA4, via the intermediates 1'-deoxy-ABA or 1',4'-trans-diol-ABA, depending on the order of action of these 2 enzymes. ABA2 is responsible for the hydroxylation of carbon atom C-1' and ABA4 might be involved in the oxidation of the C-4' carbon atom. The sequence is that of Short-chain dehydrogenase/reductase ABA4 (ABA4) from Pyricularia oryzae (strain Y34) (Rice blast fungus).